Consider the following 477-residue polypeptide: Spliceosome-associated protein CWC27 homolog (477 aa).

A PPIase cyclophilin-type domain is found at 11–166 (SNGKVLLKTT…NPHKIKCTEV (156 aa)). Disordered stretches follow at residues 203–355 (LLSF…AENT) and 401–477 (TQAI…KERR). The segment covering 208 to 218 (EEAEEDEEEVN) has biased composition (acidic residues). 2 stretches are compositionally biased toward basic and acidic residues: residues 230–240 (SSHDLLKDDPR) and 247–258 (VEREKDSQSADS). Positions 259 to 279 (DKDEDEMSDDDDEEEDDEMDS) are enriched in acidic residues. 3 stretches are compositionally biased toward basic and acidic residues: residues 280-299 (DEKHQMKDRISNKLRKDPSK), 311-353 (EERK…KEAE), and 430-442 (QFEEKSGKVKDAN). Residues 308 to 381 (DEAEERKSSR…EEVRKKNTNK (74 aa)) adopt a coiled-coil conformation.

The protein belongs to the cyclophilin-type PPIase family. As to quaternary structure, part of the activated spliceosome B/catalytic step 1 spliceosome, one of the forms of the spliceosome which has a well-formed active site but still cannot catalyze the branching reaction and is composed at least of 52 proteins, the U2, U5 and U6 snRNAs and the pre-mRNA. Recruited during early steps of activated spliceosome B maturation, it is probably one of the first proteins released from this complex as he matures to the spliceosome C complex. Component of the minor spliceosome, which splices U12-type introns.

The protein localises to the nucleus. In terms of biological role, as part of the spliceosome, plays a role in pre-mRNA splicing. Probable inactive PPIase with no peptidyl-prolyl cis-trans isomerase activity. The sequence is that of Spliceosome-associated protein CWC27 homolog (cwc27) from Xenopus laevis (African clawed frog).